Consider the following 252-residue polypeptide: MAALIPENLSREQCLYLAKLAEQAERYEEMVQFMDKLVLNSTPAGELTVEERNLLSVAYKNVIGSLRAAWRIVSSIEQKEESRKNEEHVHLVKEYRGKVENELSQVCAGILKLLESNLVPSATTSESKVFYLKMKGDYYRYLAEFKIGDERKQAAEDTMNSYKAAQEIALTDLPPTHPIRLGLALNFSVFYFEILNSSDKACSMAKQAFEEAIAELDTLGEESYKDSTLIMQLLRDNLTLWTSDAQDQLDES.

It belongs to the 14-3-3 family. As to quaternary structure, homodimer.

This Solanum lycopersicum (Tomato) protein is 14-3-3 protein 10 (TFT10).